We begin with the raw amino-acid sequence, 118 residues long: Small ribosomal subunit protein uS13 (118 aa).

Positions 94-118 (GLPVRGQRTKTNARTRKGPRKPIKK) are disordered.

Belongs to the universal ribosomal protein uS13 family. Part of the 30S ribosomal subunit. Forms a loose heterodimer with protein S19. Forms two bridges to the 50S subunit in the 70S ribosome.

In terms of biological role, located at the top of the head of the 30S subunit, it contacts several helices of the 16S rRNA. In the 70S ribosome it contacts the 23S rRNA (bridge B1a) and protein L5 of the 50S subunit (bridge B1b), connecting the 2 subunits; these bridges are implicated in subunit movement. Contacts the tRNAs in the A and P-sites. The sequence is that of Small ribosomal subunit protein uS13 from Erwinia tasmaniensis (strain DSM 17950 / CFBP 7177 / CIP 109463 / NCPPB 4357 / Et1/99).